Here is a 75-residue protein sequence, read N- to C-terminus: uncharacterized protein (75 aa).

The helical transmembrane segment at 49-69 (VDIVAVATTLPFIVAVICIVF) threads the bilayer.

It localises to the host membrane. This is an uncharacterized protein from Saccharolobus islandicus (Sulfolobus islandicus).